A 127-amino-acid polypeptide reads, in one-letter code: Nitrogenase-stabilizing/protective protein NifW (127 aa).

It belongs to the NifW family. In terms of assembly, homotrimer; associates with NifD.

Functionally, may protect the nitrogenase Fe-Mo protein from oxidative damage. This Rhizobium etli (strain ATCC 51251 / DSM 11541 / JCM 21823 / NBRC 15573 / CFN 42) protein is Nitrogenase-stabilizing/protective protein NifW.